The primary structure comprises 658 residues: D-ornithine--citrate ligase (658 aa).

The protein belongs to the IucA/IucC family.

The enzyme catalyses D-ornithine + citrate + ATP = N(5)-[(S)-citryl]-D-ornithine + AMP + diphosphate + H(+). It functions in the pathway siderophore biosynthesis. Its function is as follows. Involved in the biosynthesis of the siderophore staphyloferrin A. Catalyzes the ATP-dependent condensation of D-ornithine and citrate to form a citryl-D-ornithine intermediate. In Staphylococcus aureus (strain NCTC 8325 / PS 47), this protein is D-ornithine--citrate ligase.